The chain runs to 412 residues: BSD domain-containing protein 1 (412 aa).

Residues 145 to 197 (WLSTFSLEERKAEISELLVSSPAIRALYTKMVPAAVAHAEFWQRYFYKVFQLE) enclose the BSD domain. A compositionally biased stretch (basic and acidic residues) spans 208–217 (QRAEQTDHSE). Disordered stretches follow at residues 208–227 (QRAE…EDEE), 253–272 (VTVA…ASLS), and 298–412 (ESVT…ENWE). 2 stretches are compositionally biased toward polar residues: residues 259-272 (PESS…ASLS) and 298-308 (ESVTIRVTQPS). Serine 308 bears the Phosphoserine mark. The segment covering 328 to 349 (PEERPAPREETAREDMAQDLRV) has biased composition (basic and acidic residues). The span at 353 to 372 (NSDSGKSTPSNNGKKGSSTD) shows a compositional bias: polar residues. Acidic residues-rich tracts occupy residues 373 to 390 (VSED…EEEV) and 400 to 412 (TEEL…ENWE).

This chain is BSD domain-containing protein 1 (bsdc1), found in Danio rerio (Zebrafish).